The primary structure comprises 139 residues: MCVRRVDILSRFDIALSLLQSLTHSHTVLRHLCFLPTIIYKHLCEFTISFSSPVISTGQHIDVGDEDYHDGDDDVDYTDDVDDVDDPHGSPSQLLQGGYQRNQHYGGGNYQSGYYRPNKQHGNGYGGQYPKKYGSGYKH.

The tract at residues 61 to 139 is disordered; the sequence is IDVGDEDYHD…PKKYGSGYKH (79 aa). A compositionally biased stretch (acidic residues) spans 64-85; that stretch reads GDEDYHDGDDDVDYTDDVDDVD. The segment covering 90-103 has biased composition (polar residues); sequence SPSQLLQGGYQRNQ.

The protein belongs to the immunogenic miracidial antigen family.

This is Immunogenic miracidial antigen 8I (8I) from Schistosoma japonicum (Blood fluke).